Here is a 690-residue protein sequence, read N- to C-terminus: Protein MODIFIED TRANSPORT TO THE VACUOLE 1 (690 aa).

Positions 20–150 (VTSDEDKVAP…PESINRRIEG (131 aa)) constitute a VHS domain. Disordered stretches follow at residues 228 to 258 (DGNYGTSKNTTGGSWGHASGEASESSASVRV) and 518 to 551 (FSIDENNSNQKGSSSSTLPQDLFAMPSTTSHQAP). Low complexity predominate over residues 243–257 (GHASGEASESSASVR). Polar residues predominate over residues 520–536 (IDENNSNQKGSSSSTLP).

In terms of assembly, binds to clathrin heavy chain. In terms of tissue distribution, expressed in inflorescence stems, stigmas, roots, roots meristems, embryos, and floral and leaf vasculatures, but absent from the floral abscission zone.

Its subcellular location is the golgi apparatus. The protein resides in the trans-Golgi network. It is found in the cytoplasmic vesicle. It localises to the clathrin-coated vesicle. Its function is as follows. Mediates clathrin-dependent trafficking of vacuolar cargo from the trans-Golgi network (TGN). Promotes plant growth. The sequence is that of Protein MODIFIED TRANSPORT TO THE VACUOLE 1 from Arabidopsis thaliana (Mouse-ear cress).